The sequence spans 242 residues: Small ribosomal subunit protein uS2 (242 aa).

It belongs to the universal ribosomal protein uS2 family.

This chain is Small ribosomal subunit protein uS2, found in Aeromonas salmonicida (strain A449).